The sequence spans 382 residues: Alkanesulfonate monooxygenase (382 aa).

This sequence belongs to the SsuD family.

The catalysed reaction is an alkanesulfonate + FMNH2 + O2 = an aldehyde + FMN + sulfite + H2O + 2 H(+). Catalyzes the desulfonation of aliphatic sulfonates. This is Alkanesulfonate monooxygenase from Pseudomonas putida (strain W619).